We begin with the raw amino-acid sequence, 90 residues long: Putative membrane protein insertion efficiency factor (90 aa).

The protein belongs to the UPF0161 family.

It localises to the cell inner membrane. Its function is as follows. Could be involved in insertion of integral membrane proteins into the membrane. In Bordetella bronchiseptica (strain ATCC BAA-588 / NCTC 13252 / RB50) (Alcaligenes bronchisepticus), this protein is Putative membrane protein insertion efficiency factor.